The chain runs to 647 residues: Shugoshin-2 (647 aa).

At S7 the chain carries Phosphoserine. Coiled coils occupy residues 28 to 87 (SKAQ…FHEE) and 125 to 145 (DEES…HDVS). The segment at 171 to 295 (REANVFSDTQ…DTVIQSTPTK (125 aa)) is disordered. A compositionally biased stretch (low complexity) spans 200-210 (NLSNSKPVNNN). S240 is modified (phosphoserine). Polar residues-rich tracts occupy residues 242–253 (KSLSNKINNQAA) and 282–293 (RIQSDTVIQSTP). At T292 the chain carries Phosphothreonine. 2 positions are modified to phosphoserine: S332 and S335. 2 stretches are compositionally biased toward polar residues: residues 375-396 (SLTS…NMTV) and 462-478 (EPPS…NNSP). Disordered stretches follow at residues 375–416 (SLTS…DSSV), 453–486 (RNPP…SLQG), 522–579 (TNLK…ERKK), and 593–647 (RNFD…TLNL). Basic and acidic residues-rich tracts occupy residues 528-541 (NEND…SRRE) and 593-602 (RNFDLPSDHV). Over residues 621 to 647 (KTETANITSEAPTTSEVTLENSETLNL) the composition is skewed to polar residues.

The protein belongs to the shugoshin family.

The protein localises to the chromosome. It is found in the centromere. Involved in chromosome cohesion during mitosis and meiosis by preventing premature dissociation of cohesin complex from centromeres after prophase, when most of cohesin complex dissociates from chromosomes arms. Required for faithful mitotic chromosome segregation and proper kinetochore orientation during meiosis I. In contrast to sgo1, it is dispensable for centromeric protection of rec8 during meiosis I as well as protection of rad21 during mitosis. Required to sense the lack of tension at centromeres during mitosis. This is Shugoshin-2 (sgo2) from Schizosaccharomyces pombe (strain 972 / ATCC 24843) (Fission yeast).